Consider the following 970-residue polypeptide: UvrABC system protein A (970 aa).

ATP is bound at residue 34–41; sequence GVSGSGKS. The C4-type zinc-finger motif lies at 284–311; sequence CPEHGAVMDELSPRLFSFNSPYGACPDC. ABC transporter domains are found at residues 340–617 and 637–965; these read WSEK…QRSL and GNGA…KYLA. Position 669 to 676 (669 to 676) interacts with ATP; the sequence is GVSGSGKS. The C4-type zinc finger occupies 768-794; the sequence is CEACAGQGVNVIEMNFLPDVYVQCDVC.

The protein belongs to the ABC transporter superfamily. UvrA family. In terms of assembly, forms a heterotetramer with UvrB during the search for lesions.

It localises to the cytoplasm. The UvrABC repair system catalyzes the recognition and processing of DNA lesions. UvrA is an ATPase and a DNA-binding protein. A damage recognition complex composed of 2 UvrA and 2 UvrB subunits scans DNA for abnormalities. When the presence of a lesion has been verified by UvrB, the UvrA molecules dissociate. The chain is UvrABC system protein A from Synechocystis sp. (strain ATCC 27184 / PCC 6803 / Kazusa).